We begin with the raw amino-acid sequence, 804 residues long: Phenylalanine--tRNA ligase beta subunit (804 aa).

The tRNA-binding domain maps to 38 to 148; the sequence is RAAFRAFTIA…ENAPVGTSFA (111 aa). Positions 401 to 476 constitute a B5 domain; it reads HTARVIDFPV…RIHGINRIDP (76 aa). Residues aspartate 454, aspartate 460, glutamate 463, and glutamate 464 each contribute to the Mg(2+) site. Positions 710–803 constitute an FDX-ACB domain; it reads SLFQSLKRDY…VAKQTGGVLR (94 aa).

Belongs to the phenylalanyl-tRNA synthetase beta subunit family. Type 1 subfamily. Tetramer of two alpha and two beta subunits. The cofactor is Mg(2+).

The protein localises to the cytoplasm. The catalysed reaction is tRNA(Phe) + L-phenylalanine + ATP = L-phenylalanyl-tRNA(Phe) + AMP + diphosphate + H(+). The sequence is that of Phenylalanine--tRNA ligase beta subunit from Brucella melitensis biotype 1 (strain ATCC 23456 / CCUG 17765 / NCTC 10094 / 16M).